The chain runs to 201 residues: dTTP/UTP pyrophosphatase (201 aa).

The active-site Proton acceptor is the Asp76.

Belongs to the Maf family. YhdE subfamily. A divalent metal cation is required as a cofactor.

The protein resides in the cytoplasm. The enzyme catalyses dTTP + H2O = dTMP + diphosphate + H(+). The catalysed reaction is UTP + H2O = UMP + diphosphate + H(+). In terms of biological role, nucleoside triphosphate pyrophosphatase that hydrolyzes dTTP and UTP. May have a dual role in cell division arrest and in preventing the incorporation of modified nucleotides into cellular nucleic acids. This chain is dTTP/UTP pyrophosphatase, found in Neisseria meningitidis serogroup A / serotype 4A (strain DSM 15465 / Z2491).